The following is a 2161-amino-acid chain: DNA polymerase epsilon catalytic subunit A (2161 aa).

3 short sequence motifs (nuclear localization signal) span residues 5–12 (NRRRDRKD), 1137–1144 (HKKVREKD), and 1239–1246 (LKKRKWKV). Zn(2+)-binding residues include Cys2038, Cys2041, Cys2063, and Cys2068. The segment at 2038-2068 (CSNCDAYRDLDICRDPALLTEKEWSCADTQC) adopts a CysA-type zinc-finger fold. [4Fe-4S] cluster is bound by residues Cys2099, Cys2102, Cys2114, and Cys2116. The CysB motif motif lies at 2099-2116 (CIRCNQVKAAHLTEQCEC). The Nuclear localization signal 4 motif lies at 2130–2137 (SKRMEIFM).

Belongs to the DNA polymerase type-B family. Heterotetramer. Subunit of the DNA polymerase II. Interacts (via C-terminus) with DPB2. Interacts with LHP1/TFL2. [4Fe-4S] cluster serves as cofactor. Mostly expressed at low levels in inflorescence (floral meristem and flowers until anthesis), and, to a lower extent, in roots, seeds and leaves.

The protein resides in the nucleus. The catalysed reaction is DNA(n) + a 2'-deoxyribonucleoside 5'-triphosphate = DNA(n+1) + diphosphate. Functionally, DNA polymerase II, which participates in chromosomal DNA replication. Required for the timing and determination of cell fate during plant embryogenesis and root pole development, by promoting cell cycle and cell type patterning. Necessary for proper shoot (SAM) and root apical meristem (RAM) functions. Involved in maintaining epigenetic states, controlling hypersensitive response (HR), and mediating abscisic acid (ABA) signaling. Required for flowering repression through a mechanism involving epigenetic gene silencing. May participate in processes involved in chromatin-mediated cellular memory. This chain is DNA polymerase epsilon catalytic subunit A (POL2A), found in Arabidopsis thaliana (Mouse-ear cress).